Here is an 828-residue protein sequence, read N- to C-terminus: Periplasmic nitrate reductase (828 aa).

Residues 1 to 31 constitute a signal peptide (tat-type signal); sequence MKLSRRGFMKANAVAAAAAAAGLSVPGVARA. Residues 39–95 form the 4Fe-4S Mo/W bis-MGD-type domain; sequence IKWDKAPCRFCGTGCGVLVGTQQGRVVACQGDPDAPVNRGLNCIKGYFLPKIMYGED. Positions 46, 49, 53, and 81 each coordinate [4Fe-4S] cluster. Residues lysine 83, glutamine 150, asparagine 175, cysteine 179, 212-219, 243-247, 262-264, methionine 372, glutamine 376, asparagine 482, 508-509, lysine 531, aspartate 558, and 718-727 each bind Mo-bis(molybdopterin guanine dinucleotide); these read WGANMAEM, STYQH, QSD, SD, and TGRVLEHWHT. Phenylalanine 794 contributes to the substrate binding site. Mo-bis(molybdopterin guanine dinucleotide) is bound by residues asparagine 802 and lysine 819.

This sequence belongs to the prokaryotic molybdopterin-containing oxidoreductase family. NasA/NapA/NarB subfamily. Component of the periplasmic nitrate reductase NapAB complex composed of NapA and NapB. Requires [4Fe-4S] cluster as cofactor. The cofactor is Mo-bis(molybdopterin guanine dinucleotide). In terms of processing, predicted to be exported by the Tat system. The position of the signal peptide cleavage has not been experimentally proven.

It is found in the periplasm. It catalyses the reaction 2 Fe(II)-[cytochrome] + nitrate + 2 H(+) = 2 Fe(III)-[cytochrome] + nitrite + H2O. Functionally, catalytic subunit of the periplasmic nitrate reductase complex NapAB. Receives electrons from NapB and catalyzes the reduction of nitrate to nitrite. In Shigella dysenteriae serotype 1 (strain Sd197), this protein is Periplasmic nitrate reductase.